We begin with the raw amino-acid sequence, 364 residues long: Chorismate synthase (364 aa).

Residue Arg-47 coordinates NADP(+). Residues 124–126 (RAS), Gly-287, 302–306 (KPTAT), and Arg-328 contribute to the FMN site.

It belongs to the chorismate synthase family. As to quaternary structure, homotetramer. The cofactor is FMNH2.

It carries out the reaction 5-O-(1-carboxyvinyl)-3-phosphoshikimate = chorismate + phosphate. The protein operates within metabolic intermediate biosynthesis; chorismate biosynthesis; chorismate from D-erythrose 4-phosphate and phosphoenolpyruvate: step 7/7. Functionally, catalyzes the anti-1,4-elimination of the C-3 phosphate and the C-6 proR hydrogen from 5-enolpyruvylshikimate-3-phosphate (EPSP) to yield chorismate, which is the branch point compound that serves as the starting substrate for the three terminal pathways of aromatic amino acid biosynthesis. This reaction introduces a second double bond into the aromatic ring system. The sequence is that of Chorismate synthase from Prochlorococcus marinus (strain MIT 9515).